The primary structure comprises 434 residues: V-type ATP synthase beta chain (434 aa).

The protein belongs to the ATPase alpha/beta chains family.

Produces ATP from ADP in the presence of a proton gradient across the membrane. The V-type beta chain is a regulatory subunit. The polypeptide is V-type ATP synthase beta chain (atpB) (Borreliella burgdorferi (strain ATCC 35210 / DSM 4680 / CIP 102532 / B31) (Borrelia burgdorferi)).